The primary structure comprises 265 residues: Polyphosphate glucokinase (265 aa).

A compositionally biased stretch (polar residues) spans 1–18 (MTSTGPETSETPGATTQR). Residues 1 to 22 (MTSTGPETSETPGATTQRHGFG) are disordered. Position 24–29 (24–29 (DVGGSG)) interacts with ATP.

Belongs to the ROK (NagC/XylR) family. In terms of assembly, homodimer.

It catalyses the reaction [phosphate](n) + D-glucose = [phosphate](n-1) + D-glucose 6-phosphate + H(+). The enzyme catalyses D-glucose + ATP = D-glucose 6-phosphate + ADP + H(+). Catalyzes the phosphorylation of glucose using polyphosphate or ATP as the phosphoryl donor. Polyphosphate, rather than ATP, seems to be the major phosphate donor for the enzyme in M.tuberculosis. The protein is Polyphosphate glucokinase (ppgK) of Mycobacterium tuberculosis (strain CDC 1551 / Oshkosh).